The following is a 118-amino-acid chain: Large ribosomal subunit protein bL17 (118 aa).

The protein belongs to the bacterial ribosomal protein bL17 family. In terms of assembly, part of the 50S ribosomal subunit. Contacts protein L32.

This Phytoplasma australiense protein is Large ribosomal subunit protein bL17.